The following is a 212-amino-acid chain: Adenylate kinase (212 aa).

ATP is bound at residue G10–T15. An NMP region spans residues S30–V59. AMP-binding positions include T31, R36, E57 to V59, G86 to R89, and Q93. The tract at residues G127 to D159 is LID. ATP is bound by residues R128 and T137 to F138. 2 residues coordinate AMP: R156 and R167. Q195 serves as a coordination point for ATP.

The protein belongs to the adenylate kinase family. As to quaternary structure, monomer.

It is found in the cytoplasm. The enzyme catalyses AMP + ATP = 2 ADP. The protein operates within purine metabolism; AMP biosynthesis via salvage pathway; AMP from ADP: step 1/1. Its function is as follows. Catalyzes the reversible transfer of the terminal phosphate group between ATP and AMP. Plays an important role in cellular energy homeostasis and in adenine nucleotide metabolism. The chain is Adenylate kinase from Streptococcus agalactiae serotype III (strain NEM316).